Reading from the N-terminus, the 304-residue chain is N-acetylmuramic acid 6-phosphate etherase (304 aa).

Serine 2 bears the Phosphoserine mark. One can recognise an SIS domain in the interval alanine 59–lysine 222. The active-site Proton donor is glutamate 87. Glutamate 118 is an active-site residue.

It belongs to the GCKR-like family. MurNAc-6-P etherase subfamily. As to quaternary structure, homodimer.

It carries out the reaction N-acetyl-D-muramate 6-phosphate + H2O = N-acetyl-D-glucosamine 6-phosphate + (R)-lactate. The protein operates within amino-sugar metabolism; N-acetylmuramate degradation. Its function is as follows. Specifically catalyzes the cleavage of the D-lactyl ether substituent of MurNAc 6-phosphate, producing GlcNAc 6-phosphate and D-lactate. In Bacillus subtilis (strain 168), this protein is N-acetylmuramic acid 6-phosphate etherase.